Reading from the N-terminus, the 246-residue chain is MKIHIMIAEDERLAREELMYLLQQENDIILCPSAENGDQLLNLYQEYNPNVIFLDIHMPGINGIEVAKKIRNEFEDKDIIIIFTTAYESYGVQAFEIQATDYLLKPFSEERFKIAMNRIRKTLSTKKVRKPKVDKLVVNLDEKMMVIDPNQIGFAAREGRTVKIHFISNEVIETKMNLKELEEKLSGFPFYRPHRSYLVNMDCIKEITPWFNGAYNLVIKDLAESTIPVSRTAAKGLFDALQGVHH.

Residues 4-120 enclose the Response regulatory domain; sequence HIMIAEDERL…RFKIAMNRIR (117 aa). Asp-55 is modified (4-aspartylphosphate). Positions 136–243 constitute an HTH LytTR-type domain; sequence LVVNLDEKMM…AKGLFDALQG (108 aa).

In terms of processing, phosphorylated by LytS.

The protein localises to the cytoplasm. Its function is as follows. Member of the two-component regulatory system LytS/LytT that probably regulates genes involved in cell wall metabolism. The protein is Sensory transduction protein LytT (lytT) of Oceanobacillus iheyensis (strain DSM 14371 / CIP 107618 / JCM 11309 / KCTC 3954 / HTE831).